The chain runs to 67 residues: Conotoxin Cl6.8 (67 aa).

Positions 1–22 are cleaved as a signal peptide; sequence MKVTAVLMVAVLVLTACQLTTA. A propeptide spanning residues 23 to 39 is cleaved from the precursor; sequence NTTDYVRRILARKSTMS. 3 disulfides stabilise this stretch: C43–C58, C50–C62, and C57–C66. C66 is modified (cysteine amide).

The protein belongs to the conotoxin O1 superfamily. In terms of tissue distribution, expressed by the venom duct.

It localises to the secreted. The polypeptide is Conotoxin Cl6.8 (Californiconus californicus (California cone)).